A 526-amino-acid chain; its full sequence is MSTTVRPDEVSSILRKQLAGFESEADVYDVGTVLQVGDGIARVYGLSKAAAGELLEFPNKVMGMALNLEEDNVGAVLFGESNLVKEGDTVKRTGILASIPVGEAMLGRVINPLGEPIDGKGPIETQIRLPLERRAPGVIYRKSVHEPLQTGLKAIDSMIPIGRGQRELIIGDRQTGKTAVAIDTIINQKGKGVFCIYVAIGLKGSTVAQVVNTLEKFGAMEYTTVITATASDPAPLQFIAPFAGATLGEYFRDTGRHALVVYDDLSKQAVAYRQLSLLLRRPPGREAYPGDVFYLHSRLLERAAKITDDIEVARKMNDLPDALKSMVKGGGSLTALPVIETQAGDVSAYIPTNVISITDGQIFLESNLFNSGQRPAINVGISVSRVGGSAQIKAMKKVAGTLRLDLAQFRELEAFSKFGSDLDKTTKAQLDRGARLVEILKQGQYIPMAVEKQVAIIFLGTQGLLDAVDVTRIRKFEEEFLGLLEHKHPEVLKAIAETGTLETDTANKIKEAAQKFIASFNQKAKA.

171–178 (GDRQTGKT) serves as a coordination point for ATP.

It belongs to the ATPase alpha/beta chains family. As to quaternary structure, F-type ATPases have 2 components, CF(1) - the catalytic core - and CF(0) - the membrane proton channel. CF(1) has five subunits: alpha(3), beta(3), gamma(1), delta(1), epsilon(1). CF(0) has four main subunits: a(1), b(1), b'(1) and c(9-12).

It localises to the cell inner membrane. The catalysed reaction is ATP + H2O + 4 H(+)(in) = ADP + phosphate + 5 H(+)(out). In terms of biological role, produces ATP from ADP in the presence of a proton gradient across the membrane. The alpha chain is a regulatory subunit. The protein is ATP synthase subunit alpha of Chlorobium phaeobacteroides (strain DSM 266 / SMG 266 / 2430).